We begin with the raw amino-acid sequence, 506 residues long: RNA-splicing ligase RtcB homolog (506 aa).

Residues aspartate 120, cysteine 123, histidine 228, histidine 260, and histidine 354 each coordinate Mn(2+). A GMP-binding site is contributed by 227 to 231 (NHYAE). Residues 354–355 (HN), 403–406 (GGSM), serine 410, 429–432 (HGAG), and lysine 505 contribute to the GMP site. Histidine 429 acts as the GMP-histidine intermediate in catalysis.

The protein belongs to the RtcB family. Catalytic component of the tRNA-splicing ligase complex. The cofactor is Mn(2+).

The enzyme catalyses a 3'-end 3'-phospho-ribonucleotide-RNA + a 5'-end dephospho-ribonucleoside-RNA + GTP = a ribonucleotidyl-ribonucleotide-RNA + GMP + diphosphate. The catalysed reaction is a 3'-end 2',3'-cyclophospho-ribonucleotide-RNA + a 5'-end dephospho-ribonucleoside-RNA + GTP + H2O = a ribonucleotidyl-ribonucleotide-RNA + GMP + diphosphate + H(+). Functionally, catalytic subunit of the tRNA-splicing ligase complex that acts by directly joining spliced tRNA halves to mature-sized tRNAs by incorporating the precursor-derived splice junction phosphate into the mature tRNA as a canonical 3',5'-phosphodiester. May act as an RNA ligase with broad substrate specificity, and may function toward other RNAs. The sequence is that of RNA-splicing ligase RtcB homolog from Anopheles gambiae (African malaria mosquito).